A 511-amino-acid polypeptide reads, in one-letter code: Zinc finger CCCH-type with G patch domain-containing protein (511 aa).

The C3H1-type zinc-finger motif lies at 157–180; it reads PCSYYLEGECRFDEARCRYSHGAL. Residues 254 to 281 are disordered; it reads DQEDELTSEDSSSVNDGSSDEEESDMDD. The segment covering 271 to 281 has biased composition (acidic residues); the sequence is SSDEEESDMDD. Residues 311-357 enclose the G-patch domain; it reads TRGIGSKLMEKMGYIHGTGLGSDGRGIVTPVSAQILPKGRSLDACME. Disordered regions lie at residues 409–433 and 478–511; these read GSDN…QHST and MHNQ…MFEF. Positions 414-425 are enriched in basic and acidic residues; that stretch reads QQAEPEAKKAKA. Over residues 478–493 the composition is skewed to polar residues; that stretch reads MHNQKQELATLQAQER. Positions 494–511 are enriched in basic and acidic residues; sequence SLSKEQQTRKSKNKMFEF.

It is found in the nucleus. Transcription repressor. The chain is Zinc finger CCCH-type with G patch domain-containing protein from Drosophila ananassae (Fruit fly).